The following is a 168-amino-acid chain: MLPQRLHPSRLLALALFSLVLGLAGCQTKPPQTGLSAEQIAVLQEQGFELRDEGWEFGMSSKVLFGNNLDRLNPDSRNTLTKIARALLAVDIDKVRLEGHTDNYGDEGYNQKLSERRAESVAAVFREAGMPAANIEVRGLGMSKPVADNKTRAGRSENRRVAIIVPAE.

An N-terminal signal peptide occupies residues 1-25; the sequence is MLPQRLHPSRLLALALFSLVLGLAG. Cys-26 is lipidated: N-palmitoyl cysteine. Cys-26 is lipidated: S-diacylglycerol cysteine. One can recognise an OmpA-like domain in the interval 53 to 168; that stretch reads EGWEFGMSSK…RRVAIIVPAE (116 aa).

The protein belongs to the outer membrane OOP (TC 1.B.6) superfamily. Homodimer. Interacts with YfiR. The YfiB-YfiR complex is a 2:2 heterotetramer.

The protein localises to the cell outer membrane. Both lipid anchor in the outer membrane and peptidoglycan binding are required for full activity. Once activated by certain cell stress, the dimeric YfiB transforms from a compact conformation to a stretched conformation, allowing the periplasmic domain of the membrane-anchored YfiB to penetrate the cell wall and sequester the YfiR dimer. GMP enhances the binding affinity between YfiB and YfiR. Its function is as follows. Activates the diguanylate cyclase TpbB/YfiN by sequestering YfiR at the outer membrane, which counteracts the YfiR-mediated repression of TpbB/YfiN at the inner membrane and leads to increased c-di-GMP production. May act as a sensor of envelope stress. Functionally, part of the YfiB-TpbB-YfiR (or yfiBNR) system, encoding a tripartite signaling module that modulates intracellular c-di-GMP levels. The system is a key regulator of the small colony variant (SCV) phenotype, and plays an important role in biofilm formation and in vivo persistence. The c-di-GMP produced by TpbB/YfiN stimulates the production of the Pel and Psl exopolysaccharides, which promotes surface attachment, generates an SCV phenotype and confers resistance against phagocytosis. In Pseudomonas aeruginosa (strain ATCC 15692 / DSM 22644 / CIP 104116 / JCM 14847 / LMG 12228 / 1C / PRS 101 / PAO1), this protein is Outer-membrane lipoprotein YfiB.